The following is a 387-amino-acid chain: Cytochrome b (387 aa).

4 helical membrane-spanning segments follow: residues 32–52, 76–98, 113–133, and 179–199; these read FGSL…TLAM, WLVR…LHIG, TWAI…LGYV, and FFAL…MHLI. Residues His82 and His96 each coordinate heme b. The heme b site is built by His183 and His197. A ubiquinone is bound at residue His202. Helical transmembrane passes span 226–246, 290–310, 322–342, and 349–369; these read FIFK…IFVF, LLGV…PITD, LSKV…QIGA, and FIEF…VIVP.

The protein belongs to the cytochrome b family. As to quaternary structure, fungal cytochrome b-c1 complex contains 10 subunits; 3 respiratory subunits, 2 core proteins and 5 low-molecular weight proteins. Cytochrome b-c1 complex is a homodimer. The cofactor is heme b.

It is found in the mitochondrion inner membrane. In terms of biological role, component of the ubiquinol-cytochrome c reductase complex (complex III or cytochrome b-c1 complex) that is part of the mitochondrial respiratory chain. The b-c1 complex mediates electron transfer from ubiquinol to cytochrome c. Contributes to the generation of a proton gradient across the mitochondrial membrane that is then used for ATP synthesis. This Emericella nidulans (Aspergillus nidulans) protein is Cytochrome b (cob).